The following is a 278-amino-acid chain: Msm operon regulatory protein (278 aa).

An HTH araC/xylS-type domain is found at 176 to 274 (NQVKKIIHSQ…GKSPSKFRKE (99 aa)). DNA-binding regions (H-T-H motif) lie at residues 193–214 (NDIA…RKST) and 241–264 (IAEI…KNYF).

Regulatory protein for the msm operon for multiple sugar metabolism. Activates the transcription of the msmEFGK, aga, dexB and gftA genes. The protein is Msm operon regulatory protein (msmR) of Streptococcus mutans serotype c (strain ATCC 700610 / UA159).